A 311-amino-acid chain; its full sequence is 4-hydroxyproline 2-epimerase (311 aa).

Cys-88 serves as the catalytic Proton acceptor. Substrate is bound by residues 89–90, His-208, and Asp-232; that span reads GH. Cys-236 (proton donor) is an active-site residue. Substrate is bound at residue 237 to 238; sequence GT.

The protein belongs to the proline racemase family.

It carries out the reaction trans-4-hydroxy-L-proline = cis-4-hydroxy-D-proline. Functionally, catalyzes the epimerization of trans-4-hydroxy-L-proline (t4LHyp) to cis-4-hydroxy-D-proline (c4DHyp). Is likely involved in a degradation pathway that converts t4LHyp to alpha-ketoglutarate. Displays no proline racemase activity. This Chromohalobacter salexigens (strain ATCC BAA-138 / DSM 3043 / CIP 106854 / NCIMB 13768 / 1H11) protein is 4-hydroxyproline 2-epimerase.